The chain runs to 544 residues: Phenylalanine--tRNA ligase beta subunit (544 aa).

The B5 domain maps to 270–346; sequence LEPKTRFLTK…KGYGYENIKV (77 aa). Mg(2+)-binding residues include D324, D330, E333, and D334.

It belongs to the phenylalanyl-tRNA synthetase beta subunit family. Type 2 subfamily. As to quaternary structure, tetramer of two alpha and two beta subunits. Mg(2+) serves as cofactor.

The protein localises to the cytoplasm. The enzyme catalyses tRNA(Phe) + L-phenylalanine + ATP = L-phenylalanyl-tRNA(Phe) + AMP + diphosphate + H(+). This Methanosarcina barkeri (strain Fusaro / DSM 804) protein is Phenylalanine--tRNA ligase beta subunit.